Reading from the N-terminus, the 177-residue chain is Large ribosomal subunit protein uL6 (177 aa).

The protein belongs to the universal ribosomal protein uL6 family. In terms of assembly, part of the 50S ribosomal subunit.

This protein binds to the 23S rRNA, and is important in its secondary structure. It is located near the subunit interface in the base of the L7/L12 stalk, and near the tRNA binding site of the peptidyltransferase center. This is Large ribosomal subunit protein uL6 from Herminiimonas arsenicoxydans.